Consider the following 147-residue polypeptide: Hemoglobin subunit beta (147 aa).

Residue valine 2 is modified to N-acetylvaline. In terms of domain architecture, Globin spans 3 to 147 (HLSGSEKTAV…VSHALAHKYH (145 aa)). Threonine 13 carries the phosphothreonine modification. A Phosphoserine modification is found at serine 45. Lysine 60 carries the post-translational modification N6-acetyllysine. Position 64 (histidine 64) interacts with heme b. At lysine 83 the chain carries N6-acetyllysine. A heme b-binding site is contributed by histidine 93. Cysteine 94 is modified (S-nitrosocysteine). The residue at position 145 (lysine 145) is an N6-acetyllysine.

The protein belongs to the globin family. As to quaternary structure, heterotetramer of two alpha chains and two beta chains. In terms of tissue distribution, red blood cells.

Its function is as follows. Involved in oxygen transport from the lung to the various peripheral tissues. This chain is Hemoglobin subunit beta (HBB), found in Tachyglossus aculeatus aculeatus (Southeast Australian short-beaked echidna).